The following is a 718-amino-acid chain: Catalase-peroxidase (718 aa).

Residues Trp98–Tyr219 constitute a cross-link (tryptophyl-tyrosyl-methioninium (Trp-Tyr) (with M-245)). His99 (proton acceptor) is an active-site residue. Positions Tyr219–Met245 form a cross-link, tryptophyl-tyrosyl-methioninium (Tyr-Met) (with W-98). His260 contributes to the heme b binding site.

It belongs to the peroxidase family. Peroxidase/catalase subfamily. In terms of assembly, homodimer or homotetramer. Requires heme b as cofactor. Formation of the three residue Trp-Tyr-Met cross-link is important for the catalase, but not the peroxidase activity of the enzyme.

It catalyses the reaction H2O2 + AH2 = A + 2 H2O. The catalysed reaction is 2 H2O2 = O2 + 2 H2O. Its function is as follows. Bifunctional enzyme with both catalase and broad-spectrum peroxidase activity. The sequence is that of Catalase-peroxidase from Acinetobacter baumannii (strain AB307-0294).